The primary structure comprises 335 residues: MSLQKCQEEWSEIEKEFQQLQETHKVYKQKLEELNSLQNLCSSCINKHKRRLTEFKGNLHGLKRTSNLEEKELVQQIDGTIKERRNAFFDMEAYLPKKNGLYLNLVLGNVNVTLLSTQAKFAYKDEYEKFKLYLTIILLLGAITCRFVLNYRVTDEVFNFLLVWYYCTLTIRESILISNGSRIKGWWVSHHYVSTFLSGVMLTWPDGLMYQIFRNQFLAFSIFQSCVQFLQYYYQSGCLYRLRALGERNHLDLTVEGFQSWMWRGLTFLLPFLFFGHFWQLYNAITLFGLSRHDACKEWQVFVLALTFLLLFLGNFLTTLKVVHTKFQKNKLKKP.

Residues 1–40 (MSLQKCQEEWSEIEKEFQQLQETHKVYKQKLEELNSLQNL) are a coiled coil. Transmembrane regions (helical) follow at residues 100-122 (GLYLNLVLGNVNVTLLSTQAKFA), 130-150 (FKLYLTIILLLGAITCRFVLN), 157-177 (VFNFLLVWYYCTLTIRESILI), 193-213 (VSTFLSGVMLTWPDGLMYQIF), 268-288 (FLLPFLFFGHFWQLYNAITLF), and 300-320 (QVFVLALTFLLLFLGNFLTTL).

It belongs to the TMEM120 family.

Its subcellular location is the nucleus inner membrane. Necessary for efficient adipogenesis. Does not show ion channel activity. In Xenopus laevis (African clawed frog), this protein is Transmembrane protein 120B-A (tmem120b-a).